Here is a 318-residue protein sequence, read N- to C-terminus: L-lactate dehydrogenase (318 aa).

NAD(+)-binding positions include Val18, Asp39, Lys44, Tyr69, and Gly83 to Ala84. Positions 86 and 92 each coordinate substrate. Residues Ser105, Val122–Asn124, and Ser147 each bind NAD(+). Asn124 to Asp127 lines the substrate pocket. Residue Asp152–Arg155 coordinates substrate. His179 acts as the Proton acceptor in catalysis. Phosphotyrosine is present on Tyr225. Position 234 (Thr234) interacts with substrate.

The protein belongs to the LDH/MDH superfamily. LDH family. In terms of assembly, homotetramer.

The protein resides in the cytoplasm. It catalyses the reaction (S)-lactate + NAD(+) = pyruvate + NADH + H(+). It functions in the pathway fermentation; pyruvate fermentation to lactate; (S)-lactate from pyruvate: step 1/1. Its function is as follows. Catalyzes the conversion of lactate to pyruvate. The sequence is that of L-lactate dehydrogenase from Clostridium botulinum (strain Kyoto / Type A2).